Consider the following 177-residue polypeptide: MFHATTILAYKGKNKAVIGGDGQVSFGNTVLKGNAVKIRKIHNGKVLAGFAGSTADAFNLFDMFEKNLEHTKGDLLKAVIEFSKEWRKDKYLRKLEAMMLVLDRDKIFLLSGTGDVVEPEDGKIAAIGSGGNYALSAARALDKFADIDEEELVKESLKIAGEICIYTNTNIKTYVLE.

Threonine 5 is an active-site residue. Na(+) contacts are provided by glycine 161, cysteine 164, and threonine 167.

The protein belongs to the peptidase T1B family. HslV subfamily. In terms of assembly, a double ring-shaped homohexamer of HslV is capped on each side by a ring-shaped HslU homohexamer. The assembly of the HslU/HslV complex is dependent on binding of ATP.

The protein localises to the cytoplasm. It carries out the reaction ATP-dependent cleavage of peptide bonds with broad specificity.. Its activity is regulated as follows. Allosterically activated by HslU binding. Functionally, protease subunit of a proteasome-like degradation complex believed to be a general protein degrading machinery. The sequence is that of ATP-dependent protease subunit HslV from Campylobacter concisus (strain 13826).